A 197-amino-acid chain; its full sequence is Imidazoleglycerol-phosphate dehydratase (197 aa).

This sequence belongs to the imidazoleglycerol-phosphate dehydratase family.

The protein resides in the cytoplasm. The catalysed reaction is D-erythro-1-(imidazol-4-yl)glycerol 3-phosphate = 3-(imidazol-4-yl)-2-oxopropyl phosphate + H2O. It participates in amino-acid biosynthesis; L-histidine biosynthesis; L-histidine from 5-phospho-alpha-D-ribose 1-diphosphate: step 6/9. The protein is Imidazoleglycerol-phosphate dehydratase of Chromobacterium violaceum (strain ATCC 12472 / DSM 30191 / JCM 1249 / CCUG 213 / NBRC 12614 / NCIMB 9131 / NCTC 9757 / MK).